The following is an 81-amino-acid chain: MKLTCMMIVAVLFLTASIFITADNSRNGIENLPRMRRHEMKKPKASKLNKRGCLPDEYFCGFSMIGALLCCSGWCLGICMT.

The first 22 residues, 1–22 (MKLTCMMIVAVLFLTASIFITA), serve as a signal peptide directing secretion. A propeptide spanning residues 23–51 (DNSRNGIENLPRMRRHEMKKPKASKLNKR) is cleaved from the precursor. Disulfide bonds link Cys53–Cys71, Cys60–Cys75, and Cys70–Cys79.

It belongs to the conotoxin O1 superfamily. In terms of tissue distribution, expressed by the venom duct.

The protein localises to the secreted. Omega-conotoxins act at presynaptic membranes, they bind and block voltage-gated calcium channels (Cav). The chain is Omega-conotoxin-like 3 from Conus imperialis (Imperial cone).